A 136-amino-acid chain; its full sequence is Large ribosomal subunit protein uL16 (136 aa).

It belongs to the universal ribosomal protein uL16 family. As to quaternary structure, part of the 50S ribosomal subunit.

Binds 23S rRNA and is also seen to make contacts with the A and possibly P site tRNAs. The sequence is that of Large ribosomal subunit protein uL16 from Hamiltonella defensa subsp. Acyrthosiphon pisum (strain 5AT).